We begin with the raw amino-acid sequence, 462 residues long: Metacaspase-1 (462 aa).

Over residues 1-21 (MSYYPPPSGYPGGPPAYPPPQ) the composition is skewed to pro residues. A disordered region spans residues 1–150 (MSYYPPPSGY…PPPPSGSVAF (150 aa)). Residues 22 to 33 (QQQQQQQQYPSY) show a composition bias toward low complexity. 2 stretches are compositionally biased toward pro residues: residues 49-69 (PSYP…PPHS) and 77-102 (SPQP…PPSP). Active-site residues include His253 and Cys309.

This sequence belongs to the peptidase C14B family.

Its function is as follows. Involved in cell death (apoptosis). The sequence is that of Metacaspase-1 (MCA1) from Coccidioides immitis (strain RS) (Valley fever fungus).